Here is a 475-residue protein sequence, read N- to C-terminus: Ribulose bisphosphate carboxylase large chain (475 aa).

The propeptide occupies 1–2 (MS). At proline 3 the chain carries N-acetylproline. Lysine 14 bears the N6,N6,N6-trimethyllysine mark. Substrate is bound by residues asparagine 123 and threonine 173. Lysine 175 (proton acceptor) is an active-site residue. Lysine 177 serves as a coordination point for substrate. Positions 201, 203, and 204 each coordinate Mg(2+). Residue lysine 201 is modified to N6-carboxylysine. The Proton acceptor role is filled by histidine 294. Substrate-binding residues include arginine 295, histidine 327, and serine 379.

It belongs to the RuBisCO large chain family. Type I subfamily. In terms of assembly, heterohexadecamer of 8 large chains and 8 small chains; disulfide-linked. The disulfide link is formed within the large subunit homodimers. The cofactor is Mg(2+). In terms of processing, the disulfide bond which can form in the large chain dimeric partners within the hexadecamer appears to be associated with oxidative stress and protein turnover.

The protein resides in the plastid. The protein localises to the chloroplast. The catalysed reaction is 2 (2R)-3-phosphoglycerate + 2 H(+) = D-ribulose 1,5-bisphosphate + CO2 + H2O. The enzyme catalyses D-ribulose 1,5-bisphosphate + O2 = 2-phosphoglycolate + (2R)-3-phosphoglycerate + 2 H(+). RuBisCO catalyzes two reactions: the carboxylation of D-ribulose 1,5-bisphosphate, the primary event in carbon dioxide fixation, as well as the oxidative fragmentation of the pentose substrate in the photorespiration process. Both reactions occur simultaneously and in competition at the same active site. The chain is Ribulose bisphosphate carboxylase large chain (rbcL) from Cucumis sativus (Cucumber).